The chain runs to 95 residues: Osteocalcin-2 (95 aa).

The N-terminal stretch at 1-23 (MRTLSLLTLLALAALCLSDLTDA) is a signal peptide. The propeptide occupies 24 to 49 (KPSGPESDKAFMSKQEGNKVVNRLRR). The region spanning 46–92 (RLRRYLGASVPSPDPLEPTREQCELNPACDELSDQYGLKTAYKRIYG) is the Gla domain. Residues Glu-62, Glu-66, Glu-69, and Asp-75 each contribute to the Ca(2+) site. A disulfide bridge links Cys-68 with Cys-74.

This sequence belongs to the osteocalcin/matrix Gla protein family. In terms of processing, gamma-carboxyglutamate residues are formed by vitamin K dependent carboxylation by GGCX. These residues are essential for the binding of calcium. Carboxylated in a Ptprv/Esp-dependent process. Decarboxylation promotes the hormone activity. As to expression, bone.

The protein resides in the secreted. The carboxylated form is one of the main organic components of the bone matrix, which constitutes 1-2% of the total bone protein: it acts as a negative regulator of bone formation and is required to limit bone formation without impairing bone resorption or mineralization. The carboxylated form binds strongly to apatite and calcium. Its function is as follows. The uncarboxylated form acts as a hormone secreted by osteoblasts, which regulates different cellular processes, such as energy metabolism, male fertility and brain development. Regulates of energy metabolism by acting as a hormone favoring pancreatic beta-cell proliferation, insulin secretion and sensitivity and energy expenditure. Uncarboxylated osteocalcin hormone also promotes testosterone production in the testes: acts as a ligand for G protein-coupled receptor GPRC6A at the surface of Leydig cells, initiating a signaling response that promotes the expression of enzymes required for testosterone synthesis in a CREB-dependent manner. Also acts as a regulator of brain development: osteocalcin hormone crosses the blood-brain barrier and acts as a ligand for GPR158 on neurons, initiating a signaling response that prevents neuronal apoptosis in the hippocampus, favors the synthesis of all monoamine neurotransmitters and inhibits that of gamma-aminobutyric acid (GABA). Osteocalcin also crosses the placenta during pregnancy and maternal osteocalcin is required for fetal brain development. In Mus musculus (Mouse), this protein is Osteocalcin-2 (Bglap2).